A 110-amino-acid chain; its full sequence is U1-lycotoxin-Ls1ee (110 aa).

The signal sequence occupies residues 1–20; it reads MKFVLLFGVLLVTLFSYSSA. The propeptide occupies 21-44; sequence EMLDDFDQADEDELLSLIEKEEAR. 4 cysteine pairs are disulfide-bonded: cysteine 47/cysteine 62, cysteine 54/cysteine 71, cysteine 61/cysteine 89, and cysteine 73/cysteine 87.

Belongs to the neurotoxin 19 (CSTX) family. 03 subfamily. In terms of tissue distribution, expressed by the venom gland.

Its subcellular location is the secreted. In Lycosa singoriensis (Wolf spider), this protein is U1-lycotoxin-Ls1ee.